The primary structure comprises 296 residues: Transposase for insertion sequence element IST2 (296 aa).

The protein belongs to the transposase mutator family.

In terms of biological role, required for the transposition of the insertion element. The polypeptide is Transposase for insertion sequence element IST2 (Acidithiobacillus ferrooxidans (Thiobacillus ferrooxidans)).